The primary structure comprises 616 residues: Bifunctional 2-aminoethylphosphonate cytidylyltransferase/aminotransferase (616 aa).

Residues 1 to 240 (MIKQAVILAG…VKNIYPHIVE (240 aa)) are 2-aminoethylphosphonate cytidylyltransferase. 8 residues coordinate CMP-(2-aminoethyl)phosphonate: Leu8, Gly10, Gly11, Lys25, Thr83, Thr88, Glu104, and Ser105. Residues Asp106 and Asp136 each coordinate Mg(2+). Residues Asp136, Lys153, and Glu196 each contribute to the CMP-(2-aminoethyl)phosphonate site. 2 residues coordinate Mg(2+): Glu220 and Asp222. Positions 250-616 (EVLLNPGPAT…EYMNGIGVGV (367 aa)) are 2-aminoethylphosphonate aminotransferase. Positions 313, 314, 315, 390, 441, and 490 each coordinate pyridoxal 5'-phosphate.

It in the N-terminal section; belongs to the LicC/PntC cytidylyltransferase family. In the C-terminal section; belongs to the class-V pyridoxal-phosphate-dependent aminotransferase family. PhnW subfamily. As to quaternary structure, homodimer. Mg(2+) is required as a cofactor. Requires Zn(2+) as cofactor. The cofactor is pyridoxal 5'-phosphate.

It catalyses the reaction (2-aminoethyl)phosphonate + CTP = CMP-(2-aminoethyl)phosphonate + diphosphate. It carries out the reaction (2-aminoethyl)phosphonate + pyruvate = phosphonoacetaldehyde + L-alanine. It participates in phosphorus metabolism; phosphonate biosynthesis. Cytidylyltransferase activity is inhibited in the presence of EDTA and is restored by the addition of Mg(2+) or Zn(2+). Its function is as follows. Bifunctional transferase involved in the biosynthesis of cell-surface phosphonates. The aminotransferase region catalyzes the transformation of phosphonoacetaldehyde (PnAA) to 2-aminoethylphosphonate (AEP). The cytidylyltransferase region catalyzes the activation of 2-aminoethylphosphonate (AEP) to CMP-2-aminoethylphosphonate (CMP-AEP). Cannot use phosphocholine. Exhibits strong activity towards CTP, limited activity towards ATP and no activity with GTP. In Treponema denticola (strain ATCC 35405 / DSM 14222 / CIP 103919 / JCM 8153 / KCTC 15104), this protein is Bifunctional 2-aminoethylphosphonate cytidylyltransferase/aminotransferase.